A 497-amino-acid polypeptide reads, in one-letter code: Probable cytosol aminopeptidase (497 aa).

Positions 263 and 268 each coordinate Mn(2+). Residue Lys-275 is part of the active site. Asp-286, Asp-345, and Glu-347 together coordinate Mn(2+). Arg-349 is an active-site residue.

The protein belongs to the peptidase M17 family. Mn(2+) serves as cofactor.

It localises to the cytoplasm. The catalysed reaction is Release of an N-terminal amino acid, Xaa-|-Yaa-, in which Xaa is preferably Leu, but may be other amino acids including Pro although not Arg or Lys, and Yaa may be Pro. Amino acid amides and methyl esters are also readily hydrolyzed, but rates on arylamides are exceedingly low.. It catalyses the reaction Release of an N-terminal amino acid, preferentially leucine, but not glutamic or aspartic acids.. Presumably involved in the processing and regular turnover of intracellular proteins. Catalyzes the removal of unsubstituted N-terminal amino acids from various peptides. The protein is Probable cytosol aminopeptidase of Brucella suis biovar 1 (strain 1330).